The primary structure comprises 555 residues: Cinnamate beta-D-glucosyltransferase (555 aa).

Histidine 19 serves as the catalytic Proton acceptor. Residue histidine 19 participates in an anthocyanidin binding. Positions 344, 359, 362, 363, 364, and 367 each coordinate UDP-alpha-D-glucose. Glycine 382 contacts an anthocyanidin. Residues aspartate 383 and glutamine 384 each contribute to the UDP-alpha-D-glucose site.

Belongs to the UDP-glycosyltransferase family. Highest expression detected in fruit, with lower levels detected in flower and petiole. Barely detectable in leaf and root.

The catalysed reaction is (E)-cinnamate + UDP-alpha-D-glucose = 1-O-(trans-cinnamoyl)-beta-D-glucose + UDP. Broad spectrum multifunctional glucosyltransferase. Catalyzes the formation of cinnamic acid and p-coumaric acid glucose esters during fruit ripening. Accepted substrates range from derivatives of cinnamic acid and benzoic acid to heterocyclic and aliphatic compounds, resulting in the formation of O- and S-glucose esters and O-glucosides. May also be involved in detoxification of xenobiotics. The polypeptide is Cinnamate beta-D-glucosyltransferase (Fragaria ananassa (Strawberry)).